The chain runs to 126 residues: Large ribosomal subunit protein uL22 (126 aa).

It belongs to the universal ribosomal protein uL22 family. As to quaternary structure, part of the 50S ribosomal subunit.

This protein binds specifically to 23S rRNA; its binding is stimulated by other ribosomal proteins, e.g. L4, L17, and L20. It is important during the early stages of 50S assembly. It makes multiple contacts with different domains of the 23S rRNA in the assembled 50S subunit and ribosome. Functionally, the globular domain of the protein is located near the polypeptide exit tunnel on the outside of the subunit, while an extended beta-hairpin is found that lines the wall of the exit tunnel in the center of the 70S ribosome. This chain is Large ribosomal subunit protein uL22, found in Prochlorococcus marinus (strain NATL2A).